We begin with the raw amino-acid sequence, 436 residues long: Phosphoribosylamine--glycine ligase (436 aa).

The ATP-grasp domain occupies 106-318; the sequence is RKLFEDYDIE…LADVCQAIVD (213 aa). 133–196 serves as a coordination point for ATP; sequence LDDFDRDVVV…EERLIGEEFT (64 aa). Positions 276, 288, and 290 each coordinate Mg(2+). Mn(2+)-binding residues include Gln276, Glu288, and Asn290.

The protein belongs to the GARS family. Mg(2+) serves as cofactor. Mn(2+) is required as a cofactor.

The enzyme catalyses 5-phospho-beta-D-ribosylamine + glycine + ATP = N(1)-(5-phospho-beta-D-ribosyl)glycinamide + ADP + phosphate + H(+). It functions in the pathway purine metabolism; IMP biosynthesis via de novo pathway; N(1)-(5-phospho-D-ribosyl)glycinamide from 5-phospho-alpha-D-ribose 1-diphosphate: step 2/2. The protein is Phosphoribosylamine--glycine ligase of Methanobrevibacter smithii (strain ATCC 35061 / DSM 861 / OCM 144 / PS).